Reading from the N-terminus, the 360-residue chain is Putative mRNA-decapping protein (360 aa).

The segment at 11–28 adopts a CCHC-type zinc-finger fold; the sequence is HICSNCGRSGHEFRNCIE. Positions 163-347 constitute a Nudix hydrolase domain; that stretch reads YKYDNILYHF…KKRILTRVYL (185 aa). The short motif at 242-264 is the Nudix box element; that stretch reads GRRDKRSEENMVCACREFEEETG. Glu-249 is a Mg(2+) binding site. The Nucleophile role is filled by Glu-258. Glu-262 contributes to the Mg(2+) binding site.

It belongs to the Nudix hydrolase family. DIPP subfamily. Mg(2+) is required as a cofactor. The cofactor is Mn(2+).

The catalysed reaction is diphospho-myo-inositol polyphosphate + H2O = myo-inositol polyphosphate + phosphate.. Functionally, might function as a decapping enzyme required for the removal of the 5'-end m7GpppN cap tethered to viral and host mRNAs to allow their decay in cells. In addition to the mRNA cap, probably also efficiently hydrolyzes diphosphoinositol polyphosphates. This chain is Putative mRNA-decapping protein, found in Acanthamoeba polyphaga (Amoeba).